We begin with the raw amino-acid sequence, 333 residues long: MYILTIGSHSSLQILHGAKKEGFKTALVTPEKRVKFYKQFTFIDEVYGYKNEDEAVDYINDFANNGILIPHGSLVEYIGPERVNKIKTKIFGNRNLFEWEANQKKKMSLLKSAKIKIPEQFENPEDIDRLVIIKLPGAKGGKGYFIARNKSEAKEGLNKLLEQKMIRSIDEVIIQEYVIGVPMYFQFFNSIILNRLEIMGIDIRYETNIDGLRRLPADIKIDPTLVVVGNIPAVARESLLPLVYEYGENFVNTVKELVPPGMIGPFCLESVVTDQGDIVVFEFSGRIVAGTNLYVNGSPYSWLYWDEPMSVGRRISREIKLAINSNKLEQVLT.

5-amino-1-(5-phospho-beta-D-ribosyl)imidazole-4-carboxamide-binding residues include His-9 and Ser-73. The 231-residue stretch at 94 to 324 (RNLFEWEANQ…ISREIKLAIN (231 aa)) folds into the ATP-grasp domain. Residues 124–184 (PEDI…VPMY) and Glu-206 contribute to the ATP site. Asn-230 lines the 5-amino-1-(5-phospho-beta-D-ribosyl)imidazole-4-carboxamide pocket. Positions 269 and 282 each coordinate Mg(2+).

Belongs to the phosphohexose mutase family. Mg(2+) is required as a cofactor. It depends on Mn(2+) as a cofactor.

It carries out the reaction 5-amino-1-(5-phospho-beta-D-ribosyl)imidazole-4-carboxamide + formate + ATP = 5-formamido-1-(5-phospho-D-ribosyl)imidazole-4-carboxamide + ADP + phosphate. It functions in the pathway purine metabolism; IMP biosynthesis via de novo pathway; 5-formamido-1-(5-phospho-D-ribosyl)imidazole-4-carboxamide from 5-amino-1-(5-phospho-D-ribosyl)imidazole-4-carboxamide (formate route): step 1/1. Its function is as follows. Catalyzes the ATP- and formate-dependent formylation of 5-aminoimidazole-4-carboxamide-1-beta-d-ribofuranosyl 5'-monophosphate (AICAR) to 5-formaminoimidazole-4-carboxamide-1-beta-d-ribofuranosyl 5'-monophosphate (FAICAR) in the absence of folates. The chain is 5-formaminoimidazole-4-carboxamide-1-(beta)-D-ribofuranosyl 5'-monophosphate synthetase from Sulfurisphaera tokodaii (strain DSM 16993 / JCM 10545 / NBRC 100140 / 7) (Sulfolobus tokodaii).